We begin with the raw amino-acid sequence, 91 residues long: Acylphosphatase (91 aa).

One can recognise an Acylphosphatase-like domain in the interval 5–91 (RAHLRIYGRV…EGLEGFKVVG (87 aa)). Residues Arg-20 and Asn-38 contribute to the active site.

Belongs to the acylphosphatase family.

The enzyme catalyses an acyl phosphate + H2O = a carboxylate + phosphate + H(+). This is Acylphosphatase (acyP) from Thermococcus kodakarensis (strain ATCC BAA-918 / JCM 12380 / KOD1) (Pyrococcus kodakaraensis (strain KOD1)).